The chain runs to 137 residues: Large ribosomal subunit protein uL16 (137 aa).

Positions 1–21 (MLSPKKVKFRKRQKGRLKGKA) are enriched in basic residues. The tract at residues 1-22 (MLSPKKVKFRKRQKGRLKGKAQ) is disordered.

Belongs to the universal ribosomal protein uL16 family. Part of the 50S ribosomal subunit.

Binds 23S rRNA and is also seen to make contacts with the A and possibly P site tRNAs. This chain is Large ribosomal subunit protein uL16, found in Maridesulfovibrio salexigens (strain ATCC 14822 / DSM 2638 / NCIMB 8403 / VKM B-1763) (Desulfovibrio salexigens).